The sequence spans 883 residues: HTH-type transcriptional regulator AlkS (883 aa).

In terms of domain architecture, HTH luxR-type spans glutamate 816–glycine 881. Residues asparagine 840–arginine 859 constitute a DNA-binding region (H-T-H motif).

It participates in hydrocarbon metabolism; alkane degradation. In terms of biological role, may act as a transcriptional regulator of AlkB. In Pseudomonas putida (Arthrobacter siderocapsulatus), this protein is HTH-type transcriptional regulator AlkS (alkS).